Reading from the N-terminus, the 512-residue chain is Ascofuranone/ascochlorin biosynthesis clusters transcription regulator (512 aa).

The zn(2)-C6 fungal-type DNA-binding region spans 14-49 (CDRCHSQKLRCPRSVEPEKANPEEPCSRCRKAGVPC). Disordered stretches follow at residues 54 to 87 (RGKV…PYDI), 118 to 148 (GSGS…DPLM), and 325 to 351 (GCTR…DGSI). A compositionally biased stretch (basic residues) spans 56 to 70 (KVGRPSKATKKKSAR). Composition is skewed to low complexity over residues 118-127 (GSGSVTTSAS) and 327-342 (TRSS…GSSM).

It localises to the nucleus. Its function is as follows. Transcription factor that regulates the expression of the asc-1 and asc-2 gene clusters that mediate the biosynthesis of both ascochlorin and ascofuranone, a strong inhibitor of cyanide-insensitive alternative oxidases and a promising drug candidate against African trypanosomiasis. Binds the 5'-CGGYGNNTTW-3' motif within promoters of the target genes. The sequence is that of Ascofuranone/ascochlorin biosynthesis clusters transcription regulator from Acremonium egyptiacum (Oospora egyptiaca).